The sequence spans 306 residues: Dermonecrotic toxin LiSicTox-alphaIA2ai (306 aa).

An N-terminal signal peptide occupies residues 1–18; that stretch reads MLPYIALILVCWSVLSQA. The propeptide occupies 19–26; that stretch reads AQTDVEGR. Residue His38 is part of the active site. Residues Glu58 and Asp60 each coordinate Mg(2+). The Nucleophile role is filled by His74. 2 disulfide bridges follow: Cys78/Cys84 and Cys80/Cys223. A Mg(2+)-binding site is contributed by Asp118. The N-linked (GlcNAc...) asparagine glycan is linked to Asn283.

This sequence belongs to the arthropod phospholipase D family. Class II subfamily. Class IIa sub-subfamily. It depends on Mg(2+) as a cofactor. In terms of tissue distribution, expressed by the venom gland.

The protein resides in the secreted. It catalyses the reaction an N-(acyl)-sphingosylphosphocholine = an N-(acyl)-sphingosyl-1,3-cyclic phosphate + choline. It carries out the reaction an N-(acyl)-sphingosylphosphoethanolamine = an N-(acyl)-sphingosyl-1,3-cyclic phosphate + ethanolamine. The catalysed reaction is a 1-acyl-sn-glycero-3-phosphocholine = a 1-acyl-sn-glycero-2,3-cyclic phosphate + choline. The enzyme catalyses a 1-acyl-sn-glycero-3-phosphoethanolamine = a 1-acyl-sn-glycero-2,3-cyclic phosphate + ethanolamine. Functionally, dermonecrotic toxins cleave the phosphodiester linkage between the phosphate and headgroup of certain phospholipids (sphingolipid and lysolipid substrates), forming an alcohol (often choline) and a cyclic phosphate. This toxin acts on sphingomyelin (SM). It may also act on ceramide phosphoethanolamine (CPE), lysophosphatidylcholine (LPC) and lysophosphatidylethanolamine (LPE), but not on lysophosphatidylserine (LPS), and lysophosphatidylglycerol (LPG). It acts by transphosphatidylation, releasing exclusively cyclic phosphate products as second products. It induces complement-dependent hemolysis, dermonecrosis, vascular permeability and platelet aggregation. This is Dermonecrotic toxin LiSicTox-alphaIA2ai from Loxosceles intermedia (Brown spider).